Consider the following 313-residue polypeptide: MSFPTVFIDGDQGTTGLQIHARLRDRTDVRLLTLPAAERKDPARRADALNACDIAVLCLPDAAAREAVGFIRNPAVRVIDASSAHRTQPDWVYGFPEMADGHAQDIAHAKRVTNPGCYPTGAIGLLRPLLQAGLLPRDYPVSIHAVSGYSGGGRAAVDAFESADAATPPLPLQVYGLALEHKHVPEIRQHAGLAHRPFFVPAYGAYRQGIVLTIPIELRLLPAGVTGERLHACLAHHYADARHVDVTPLADAAAATHLDPQALNGTNDLRLGVFVNEARGQVLLSAVFDNLGKGASGAAVQNLDLMLGASSAA.

Cysteine 117 is a catalytic residue.

Belongs to the NAGSA dehydrogenase family. Type 2 subfamily.

Its subcellular location is the cytoplasm. It carries out the reaction N-acetyl-L-glutamate 5-semialdehyde + phosphate + NADP(+) = N-acetyl-L-glutamyl 5-phosphate + NADPH + H(+). The protein operates within amino-acid biosynthesis; L-arginine biosynthesis; N(2)-acetyl-L-ornithine from L-glutamate: step 3/4. In terms of biological role, catalyzes the NADPH-dependent reduction of N-acetyl-5-glutamyl phosphate to yield N-acetyl-L-glutamate 5-semialdehyde. This is N-acetyl-gamma-glutamyl-phosphate reductase from Burkholderia cenocepacia (strain ATCC BAA-245 / DSM 16553 / LMG 16656 / NCTC 13227 / J2315 / CF5610) (Burkholderia cepacia (strain J2315)).